The following is a 497-amino-acid chain: Nucleoside transporter 1 (497 aa).

Residues 1–26 lie on the Cytoplasmic side of the membrane; that stretch reads MSLKGGTAAPAPMAPPRKWYDMTSAE. The helical transmembrane segment at 27-47 threads the bilayer; the sequence is FYVYVVAFMCGISIMMPINAV. Residues 48 to 77 lie on the Extracellular side of the membrane; it reads FSAPSYMLEYYLYATKDPFLVPKMTNFWTN. A helical membrane pass occupies residues 78–98; sequence VMTYYNLISMVTSLVVEPLTL. Topologically, residues 99–107 are cytoplasmic; that stretch reads LKSFRKIPM. Residues 108–128 traverse the membrane as a helical segment; that stretch reads LVRLLGGLSVLIIEIIVLMVV. Residues 129-135 are Extracellular-facing; it reads PARGTTE. Residues 136–156 traverse the membrane as a helical segment; it reads AGAVATMCIAGFIGGLGTSIF. The Cytoplasmic segment spans residues 157-172; that stretch reads ESTVYGMFGAFPPSFT. A helical membrane pass occupies residues 173–193; the sequence is SIMMGGVGISGVLTSLIQIIV. At 194 to 208 the chain is on the extracellular side; it reads KAALPDTYEGVKKQS. A helical transmembrane segment spans residues 209–229; it reads YIYYSLDVGIQAATFIALIMM. Topologically, residues 230–337 are cytoplasmic; that stretch reads RFNSFAQLHF…SVFSVLRSVK (108 aa). The segment covering 286 to 299 has biased composition (basic and acidic residues); that stretch reads NAEAHKDDPLAERE. Residues 286-316 form a disordered region; sequence NAEAHKDDPLAERELSEEESGDSRAVEAAGE. The helical transmembrane segment at 338–358 threads the bilayer; it reads WMFVACGFNFLITLFLFPGIA. The Extracellular segment spans residues 359-361; that stretch reads TGM. Residues 362–382 form a helical membrane-spanning segment; it reads FPESKWFATVAVFIFNCCDVL. Topologically, residues 383–400 are cytoplasmic; sequence GRFSSAFRITWPRRYNQR. A helical transmembrane segment spans residues 401-421; sequence WIIVAASFARVIFVPLLLLHS. Over 422–432 the chain is Extracellular; sequence YHYIPSEAYGY. A helical membrane pass occupies residues 433 to 453; that stretch reads VMQVVFGLSSGYIASMALVLG. Topologically, residues 454–465 are cytoplasmic; it reads PQSKGIDNDGKR. The helical transmembrane segment at 466–486 threads the bilayer; it reads FVAGTLMGISILVGGTIGTVL. Over 487-497 the chain is Extracellular; sequence SIMTQTIRETY.

Belongs to the SLC29A/ENT transporter (TC 2.A.57) family.

It is found in the cell membrane. It carries out the reaction adenosine(in) = adenosine(out). The enzyme catalyses hypoxanthine(out) = hypoxanthine(in). The catalysed reaction is inosine(in) = inosine(out). It catalyses the reaction uridine(out) = uridine(in). It carries out the reaction cytidine(in) = cytidine(out). In terms of biological role, nucleoside transporter with broad substrate specificity. Transports adenosine with high affinity. Can also transport hypoxanthine, inosine, uridine and cytidine. In Crithidia fasciculata, this protein is Nucleoside transporter 1.